Reading from the N-terminus, the 321-residue chain is Transcriptional activator protein Pur-alpha (321 aa).

The interval 1-54 (MADRDSGSEQGGAALGSGGSLGHPGSGSGSGGGGGGGGGGGGSGGGGGAPGGLQ) is disordered. A2 carries the post-translational modification N-acetylalanine. The segment covering 9-51 (EQGGAALGSGGSLGHPGSGSGSGGGGGGGGGGGGSGGGGGAPG) has biased composition (gly residues). The residue at position 181 (S181) is a Phosphoserine. Residues 294–313 (LHQQQQQQQEETTAATLLLQ) show a composition bias toward low complexity. The tract at residues 294-321 (LHQQQQQQQEETTAATLLLQGEEEGEED) is disordered.

This sequence belongs to the PUR DNA-binding protein family. In terms of assembly, homodimer, heterodimer with PURB and heterotrimer with PURB and YBX1/Y-box protein 1. Interacts with FMR1; this interaction occurs in association with polyribosome.

Its subcellular location is the nucleus. Its function is as follows. This is a probable transcription activator that specifically binds the purine-rich single strand of the PUR element located upstream of the c-Myc gene. May play a role in the initiation of DNA replication and in recombination. The chain is Transcriptional activator protein Pur-alpha (Pura) from Mus musculus (Mouse).